The primary structure comprises 580 residues: Type 3 secretion system translocon protein SctE (580 aa).

Helical transmembrane passes span 313–333 (ILGA…GGAS) and 399–419 (IGSI…VVLV).

The protein belongs to the SctE/SipB/YopB family. As to quaternary structure, the core secretion machinery of the T3SS is composed of approximately 20 different proteins, including cytoplasmic components, a base, an export apparatus and a needle. This subunit is involved in the formation of a pore, called the translocon, in host membrane.

It localises to the secreted. It is found in the host membrane. In terms of biological role, component of the type III secretion system (T3SS), also called injectisome, which is used to inject bacterial effector proteins into eukaryotic host cells. IpaB/SctE and IpaC/SctB are inserted into the host membrane where they form a pore and allow the translocation of effector proteins into the cytosol of target cells. The chain is Type 3 secretion system translocon protein SctE from Shigella dysenteriae.